Here is a 257-residue protein sequence, read N- to C-terminus: Metallo-beta-lactamase type 2 (257 aa).

The N-terminal stretch at 1–30 is a signal peptide; sequence MKKNTLLKVGLCVSLLGTTQFVSTISSVQA. Zn(2+) contacts are provided by H116, H118, D120, H179, and C198. K201 and N210 together coordinate substrate. H240 contributes to the Zn(2+) binding site.

The protein belongs to the metallo-beta-lactamase superfamily. Class-B beta-lactamase family. Monomer. Zn(2+) serves as cofactor.

It is found in the periplasm. It carries out the reaction a beta-lactam + H2O = a substituted beta-amino acid. Functionally, confers resistance to the different beta-lactams antibiotics (penicillin, cephalosporin and carbapenem) via the hydrolysis of the beta-lactam ring. The polypeptide is Metallo-beta-lactamase type 2 (Bacillus sp. (strain 170)).